Here is a 500-residue protein sequence, read N- to C-terminus: Aspartyl/glutamyl-tRNA(Asn/Gln) amidotransferase subunit B (500 aa).

It belongs to the GatB/GatE family. GatB subfamily. As to quaternary structure, heterotrimer of A, B and C subunits.

The catalysed reaction is L-glutamyl-tRNA(Gln) + L-glutamine + ATP + H2O = L-glutaminyl-tRNA(Gln) + L-glutamate + ADP + phosphate + H(+). The enzyme catalyses L-aspartyl-tRNA(Asn) + L-glutamine + ATP + H2O = L-asparaginyl-tRNA(Asn) + L-glutamate + ADP + phosphate + 2 H(+). In terms of biological role, allows the formation of correctly charged Asn-tRNA(Asn) or Gln-tRNA(Gln) through the transamidation of misacylated Asp-tRNA(Asn) or Glu-tRNA(Gln) in organisms which lack either or both of asparaginyl-tRNA or glutaminyl-tRNA synthetases. The reaction takes place in the presence of glutamine and ATP through an activated phospho-Asp-tRNA(Asn) or phospho-Glu-tRNA(Gln). The chain is Aspartyl/glutamyl-tRNA(Asn/Gln) amidotransferase subunit B from Clavibacter michiganensis subsp. michiganensis (strain NCPPB 382).